The chain runs to 323 residues: MAAPKGSLWVRAQLGLLPLLLLTMALAGGPGTASAEAFDSVLGDTASCHRACQLTYPLHTYPKEEELYACQRGCRLFSICQFVDDGIDLNRTKLECESACTEAYSQSDEQYACHLGCQNQLPFAELRQEQLMSLMPKMHLLFPLTLVRSFWSDVMDSAQSFITSSWTFYLQADDGKIVIFQSKPEIQYAPQLEQEPTNLKESSLSKMSYLQMRSSQAHRNYLEDGENDGFLRCLSLNSGWILTMTLVLSVMVLLWICCATVATAVEQYVPSEKLSIYGDLEFVNEQKLNRYPASSLVLVRSKAEDHDEAGPLPTKVNLAHSEI.

Positions 1-35 are cleaved as a signal peptide; sequence MAAPKGSLWVRAQLGLLPLLLLTMALAGGPGTASA. The Extracellular segment spans residues 36–238; sequence EAFDSVLGDT…GFLRCLSLNS (203 aa). An N-linked (GlcNAc...) asparagine glycan is attached at Asn90. A helical transmembrane segment spans residues 239-259; the sequence is GWILTMTLVLSVMVLLWICCA. Over 260 to 323 the chain is Cytoplasmic; sequence TVATAVEQYV…TKVNLAHSEI (64 aa). The short motif at 263–281 is the ATG16L1-binding motif element; it reads TAVEQYVPSEKLSIYGDLE.

It belongs to the TMEM59 family. Interacts with ATG16L1 (via WD repeats). N-glycosylated.

The protein localises to the late endosome membrane. The protein resides in the lysosome membrane. It is found in the cell membrane. Its subcellular location is the golgi apparatus membrane. Acts as a regulator of autophagy in response to S.aureus infection by promoting activation of LC3 (MAP1LC3A, MAP1LC3B or MAP1LC3C). Acts by interacting with ATG16L1, leading to promote a functional complex between LC3 and ATG16L1 and promoting LC3 lipidation and subsequent activation of autophagy. Modulates the O-glycosylation and complex N-glycosylation steps occurring during the Golgi maturation of several proteins such as APP, BACE1, SEAP or PRNP. Inhibits APP transport to the cell surface and further shedding. The sequence is that of Transmembrane protein 59 (TMEM59) from Sus scrofa (Pig).